The following is a 448-amino-acid chain: Bifunctional protein GlmU (448 aa).

The interval M1–R232 is pyrophosphorylase. UDP-N-acetyl-alpha-D-glucosamine-binding positions include L11 to G14, K25, Q78, and G83 to T84. D108 serves as a coordination point for Mg(2+). Residues G144, E158, N173, and N230 each coordinate UDP-N-acetyl-alpha-D-glucosamine. A Mg(2+)-binding site is contributed by N230. Residues L233–G253 are linker. The interval G254–V448 is N-acetyltransferase. Positions 319 and 337 each coordinate UDP-N-acetyl-alpha-D-glucosamine. Residue H349 is the Proton acceptor of the active site. Residues Y352 and N363 each contribute to the UDP-N-acetyl-alpha-D-glucosamine site. Residues A366, N372–Y373, S409, and R426 each bind acetyl-CoA.

In the N-terminal section; belongs to the N-acetylglucosamine-1-phosphate uridyltransferase family. This sequence in the C-terminal section; belongs to the transferase hexapeptide repeat family. Homotrimer. It depends on Mg(2+) as a cofactor.

The protein localises to the cytoplasm. It catalyses the reaction alpha-D-glucosamine 1-phosphate + acetyl-CoA = N-acetyl-alpha-D-glucosamine 1-phosphate + CoA + H(+). It carries out the reaction N-acetyl-alpha-D-glucosamine 1-phosphate + UTP + H(+) = UDP-N-acetyl-alpha-D-glucosamine + diphosphate. It functions in the pathway nucleotide-sugar biosynthesis; UDP-N-acetyl-alpha-D-glucosamine biosynthesis; N-acetyl-alpha-D-glucosamine 1-phosphate from alpha-D-glucosamine 6-phosphate (route II): step 2/2. Its pathway is nucleotide-sugar biosynthesis; UDP-N-acetyl-alpha-D-glucosamine biosynthesis; UDP-N-acetyl-alpha-D-glucosamine from N-acetyl-alpha-D-glucosamine 1-phosphate: step 1/1. The protein operates within bacterial outer membrane biogenesis; LPS lipid A biosynthesis. Functionally, catalyzes the last two sequential reactions in the de novo biosynthetic pathway for UDP-N-acetylglucosamine (UDP-GlcNAc). The C-terminal domain catalyzes the transfer of acetyl group from acetyl coenzyme A to glucosamine-1-phosphate (GlcN-1-P) to produce N-acetylglucosamine-1-phosphate (GlcNAc-1-P), which is converted into UDP-GlcNAc by the transfer of uridine 5-monophosphate (from uridine 5-triphosphate), a reaction catalyzed by the N-terminal domain. This is Bifunctional protein GlmU from Azorhizobium caulinodans (strain ATCC 43989 / DSM 5975 / JCM 20966 / LMG 6465 / NBRC 14845 / NCIMB 13405 / ORS 571).